The following is a 356-amino-acid chain: Chorismate synthase (356 aa).

Residues Arg-44 and Arg-49 each coordinate NADP(+). FMN is bound by residues 121 to 123, Gly-278, 293 to 297, and Arg-320; these read HFS and KPTPS.

The protein belongs to the chorismate synthase family. The cofactor is FMNH2.

It catalyses the reaction 5-O-(1-carboxyvinyl)-3-phosphoshikimate = chorismate + phosphate. It participates in metabolic intermediate biosynthesis; chorismate biosynthesis; chorismate from D-erythrose 4-phosphate and phosphoenolpyruvate: step 7/7. Functionally, catalyzes the anti-1,4-elimination of the C-3 phosphate and the C-6 proR hydrogen from 5-enolpyruvylshikimate-3-phosphate (EPSP) to yield chorismate, which is the branch point compound that serves as the starting substrate for the three terminal pathways of aromatic amino acid biosynthesis. This reaction introduces a second double bond into the aromatic ring system. This chain is Chorismate synthase, found in Thermococcus gammatolerans (strain DSM 15229 / JCM 11827 / EJ3).